A 256-amino-acid chain; its full sequence is Thiazole synthase (256 aa).

The Schiff-base intermediate with DXP role is filled by Lys-95. 1-deoxy-D-xylulose 5-phosphate-binding positions include Gly-156, 182 to 183 (AG), and 204 to 205 (NT).

This sequence belongs to the ThiG family. As to quaternary structure, homotetramer. Forms heterodimers with either ThiH or ThiS.

The protein localises to the cytoplasm. The enzyme catalyses [ThiS sulfur-carrier protein]-C-terminal-Gly-aminoethanethioate + 2-iminoacetate + 1-deoxy-D-xylulose 5-phosphate = [ThiS sulfur-carrier protein]-C-terminal Gly-Gly + 2-[(2R,5Z)-2-carboxy-4-methylthiazol-5(2H)-ylidene]ethyl phosphate + 2 H2O + H(+). It participates in cofactor biosynthesis; thiamine diphosphate biosynthesis. In terms of biological role, catalyzes the rearrangement of 1-deoxy-D-xylulose 5-phosphate (DXP) to produce the thiazole phosphate moiety of thiamine. Sulfur is provided by the thiocarboxylate moiety of the carrier protein ThiS. In vitro, sulfur can be provided by H(2)S. This Alteromonas mediterranea (strain DSM 17117 / CIP 110805 / LMG 28347 / Deep ecotype) protein is Thiazole synthase.